The following is a 541-amino-acid chain: Arginine--tRNA ligase (541 aa).

A 'HIGH' region motif is present at residues 119–129 (ANPTGPLHIGH).

This sequence belongs to the class-I aminoacyl-tRNA synthetase family. As to quaternary structure, monomer.

Its subcellular location is the cytoplasm. It carries out the reaction tRNA(Arg) + L-arginine + ATP = L-arginyl-tRNA(Arg) + AMP + diphosphate. The polypeptide is Arginine--tRNA ligase (argS) (Helicobacter pylori (strain J99 / ATCC 700824) (Campylobacter pylori J99)).